Consider the following 356-residue polypeptide: Glutamine synthetase (356 aa).

Residues 26-105 (IMAEYVWVDA…VLAECWNAGG (80 aa)) form the GS beta-grasp domain. Residues 112 to 356 (FRHDCVKVMD…TKALLQFSLA (245 aa)) form the GS catalytic domain.

The protein belongs to the glutamine synthetase family. As to quaternary structure, homooctamer.

The protein localises to the cytoplasm. The catalysed reaction is L-glutamate + NH4(+) + ATP = L-glutamine + ADP + phosphate + H(+). The polypeptide is Glutamine synthetase (GLN1) (Fusarium solani subsp. phaseoli (Nectria haematococca)).